A 664-amino-acid polypeptide reads, in one-letter code: Methionine--tRNA ligase (664 aa).

The short motif at 13–23 is the 'HIGH' region element; the sequence is PYTNGPCHLGH. Residues Cys-144, Cys-147, Cys-156, and Cys-160 each contribute to the Zn(2+) site. Positions 327 to 331 match the 'KMSKS' region motif; the sequence is KFSKS. Lys-330 is a binding site for ATP. The region spanning 566–664 is the tRNA-binding domain; that stretch reads EFAKVEMKTG…TPVPSGTKIR (99 aa).

This sequence belongs to the class-I aminoacyl-tRNA synthetase family. MetG type 1 subfamily. In terms of assembly, homodimer. Zn(2+) serves as cofactor.

It localises to the cytoplasm. The catalysed reaction is tRNA(Met) + L-methionine + ATP = L-methionyl-tRNA(Met) + AMP + diphosphate. Functionally, is required not only for elongation of protein synthesis but also for the initiation of all mRNA translation through initiator tRNA(fMet) aminoacylation. The chain is Methionine--tRNA ligase from Methanospirillum hungatei JF-1 (strain ATCC 27890 / DSM 864 / NBRC 100397 / JF-1).